We begin with the raw amino-acid sequence, 580 residues long: MNYLVNYCKNSFYILIFISFTLFILSLKFLLMDLVYFIEWEIVSLHSMSIVMTFLFDWMSLMFMSFVLLISSLVIFYSDQYMGEDYNVNRFILLVLMFVMSMMMLIISPNLISILLGWDGLGLVSYCLVIYFQNVKSYNAGMLTALSNRIGDVALLLAIAWMLNYGSWNYIFYLDMMKNNFEMMVIGGLVMLAAMTKSAQIPFSSWLPAAMAAPTPVSALVHSSTLVTAGVYLLIRFNILLDNSKLGQFLLLVSGLTMFMAGLGANFEFDLKKIIALSTLSQLGLMMSILSIGYYKLAFFHLLTHALFKALLFMCAGVIIHNTKNAQDIRFMGGLSMSMPLTCSCFNIANLALCGMPFLAGFYSKDLILETVMLSYMNFFSFFLFFFSTGLTVCYSFRLVYYSMTGDFNSTTLNMLNDKGWTMSFSIFFLMVMAIIGGSMLSWLMFFNPEMICLPYYLKNLTLMVCLLGGFTGYLISNVNFFFINKSLVYYNFSFFSGSMWFMPLISTVGVVKWPLILGMYSYKMFDQGWSEYFGGQMLYNQLKIYSLYVQEFQNNNLKIYLLSYMLWVIILVSMMLFLN.

The next 16 membrane-spanning stretches (helical) occupy residues 12–32, 50–70, 92–112, 113–133, 153–173, 176–196, 218–240, 249–269, 274–294, 300–320, 343–363, 378–400, 427–447, 464–484, 500–520, and 560–580; these read FYIL…FLLM, IVMT…VLLI, ILLV…PNLI, SILL…IYFQ, VALL…YIFY, MMKN…AAMT, SALV…FNIL, FLLL…NFEF, IIAL…SIGY, FHLL…GVII, CSCF…AGFY, NFFS…FRLV, IFFL…LMFF, MVCL…FFFI, MWFM…ILGM, and IYLL…LFLN.

This sequence belongs to the complex I subunit 5 family.

The protein resides in the mitochondrion inner membrane. The catalysed reaction is a ubiquinone + NADH + 5 H(+)(in) = a ubiquinol + NAD(+) + 4 H(+)(out). Functionally, core subunit of the mitochondrial membrane respiratory chain NADH dehydrogenase (Complex I) that is believed to belong to the minimal assembly required for catalysis. Complex I functions in the transfer of electrons from NADH to the respiratory chain. The immediate electron acceptor for the enzyme is believed to be ubiquinone. In Aedes aegypti (Yellowfever mosquito), this protein is NADH-ubiquinone oxidoreductase chain 5.